The primary structure comprises 180 residues: uncharacterized protein (180 aa).

This is an uncharacterized protein from Aquifex aeolicus (strain VF5).